The chain runs to 531 residues: MDTVQSLINITLPQPEIEAPAKLEYDRTRILSIAAVVFLGYLLLRPLFDKRLPLPPAPTRLPLLGNLHQFPASNLWGTYKKWHNQYGPIMGLKYGQRTVISLGSHEVAKDLLEKRSNIYSSRPNFVVAKAFSNDANSALIAYDERWKTHHSLLSTFMNARMAAKYQFLQNIESKQALHDLMSVQGTEWMQVFHRYTISVTFTLAYGERIPELYDERILFIDELTETISSNVEKPKNLIADCFPTISILPSALMRWKKQGKVYHDSAMKFFLDNHAKALQKPGWNWVKESQTSEDANKLDREEVIYLIGVLIEAGGSTMKTFEFFVMASILFPEKVRLVQEEVDRVVGADRLPTWDDSPNLPYLHAFIREVQRWRPIFPFGVPHSNLKEDVYNGFRIPKDSVVLANHWAMDSDHKVFENADDFVPERWLEDSKLPFLAFGYGKRVCPGQHIAKRSLFIIISRTLWAYNITHAYEKGKKVEIDPHAIVQNILAGPVPFKGTFTPRDADRYRILEEEFSNIGQDEANIWDVCKP.

A helical membrane pass occupies residues 30-48 (ILSIAAVVFLGYLLLRPLF). Cysteine 445 provides a ligand contact to heme.

Belongs to the cytochrome P450 family. It depends on heme as a cofactor.

Its subcellular location is the membrane. The enzyme catalyses silphinene-15-oate + 2 reduced [NADPH--hemoprotein reductase] + 2 O2 = gamma-lactone-2-keto[5.5.5.5]fenestrane + 2 oxidized [NADPH--hemoprotein reductase] + 3 H2O + H(+). Its pathway is secondary metabolite biosynthesis; terpenoid biosynthesis. Functionally, cytochrome P450 monooxygenase; part of the gene cluster that mediates the biosynthesis of penifulvin A, a potent insecticidal sesquiterpene that features a [5.5.5.6]dioxafenestrane ring. Within the pathway, peniB catalyzes the multi-step oxidation of silphinene to synthesize gamma-lactone-2-keto[5.5.5.5]fenestrane, including oxidation of the C15 methylgroup in silphinene to form silphinene-15-oic acid, activationof the C1-C2 double bond to form the gamma-lactone-2-hydroxy[5.5.5.5]fenestrane, and dehydrogenation of the hydroxy group at C2 of gamma-lactone-2-hydroxy[5.5.5.5]fenestrane to generate gamma-lactone-2-keto[5.5.5.5]fenestrane. The first step of the pathway is performed by the sesquiterpene cyclase peniA that generates the angular triquinane scaffold silphinene via cyclization of the linear farnesyl pyrophosphate (FPP). The cytochrome P450 monooxygenase peniB and the flavin-dependent monooxygenase peniC then catalyze a series of oxidation reactions to transform silphinene into penifulvin A. This Penicillium patulum (Penicillium griseofulvum) protein is Cytochrome P450 monooxygenase peniB.